A 629-amino-acid polypeptide reads, in one-letter code: MEIGGSGAPPPLLLLPLLLLLGTGLLPASSHIETRAHAEERLLKRLFSGYNKWSRPVANISDVVLVRFGLSIAQLIDVDEKNQMMTTNVWVKQEWHDYKLRWDPGDYENVTSIRIPSELIWRPDIVLYNNADGDFAVTHLTKAHLFYDGRVQWTPPAIYKSSCSIDVTFFPFDQQNCTMKFGSWTYDKAKIDLVSMHSRVDQLDFWESGEWVIVDAVGTYNTRKYECCAEIYPDITYAFIIRRLPLFYTINLIIPCLLISCLTVLVFYLPSECGEKVTLCISVLLSLTVFLLLITEIIPSTSLVIPLIGEYLLFTMIFVTLSIVITVFVLNVHHRSPRTHTMPAWVRRVFLDIVPRLLFMKRPSVVKDNCRRLIESMHKMANAPRFWPEPESEPGILGDICNQGLSPAPTFCNRMDTAVETQPTCRSPSHKVPDLKTSEVEKASPCPSPGSCHPPNSSGAPVLIKARSLSVQHVPSSQEAAEGSIRCRSRSIQYCVSQDGAASLTESKPTGSPASLKTRPSQLPVSDQTSPCKCTCKEPSPVSPITVLKAGGTKAPPQHLPLSPALTRAVEGVQYIADHLKAEDTDFSVKEDWKYVAMVIDRIFLWMFIIVCLLGTVGLFLPPWLAGMI.

The N-terminal stretch at Met1–Ser30 is a signal peptide. Topologically, residues Ile32–Thr249 are extracellular. The N-linked (GlcNAc...) asparagine glycan is linked to Asn59. Positions 78 and 80 each coordinate Ca(2+). N-linked (GlcNAc...) asparagine glycans are attached at residues Asn109 and Asn176. 2 cysteine pairs are disulfide-bonded: Cys163–Cys177 and Cys227–Cys228. A helical transmembrane segment spans residues Ile250–Pro270. Cys273 is lipidated: S-palmitoyl cysteine. 2 helical membrane passes run Leu279–Pro299 and Leu312–Val332. Over His333–Ile603 the chain is Cytoplasmic. 2 disordered regions span residues Glu420–Gly459 and Ser503–Thr529. Ser427 bears the Phosphoserine mark. A compositionally biased stretch (basic and acidic residues) spans Lys431 to Lys442. The span at Pro449–Gly459 shows a compositional bias: low complexity. The span at Leu504–Thr529 shows a compositional bias: polar residues. Phosphoserine occurs at positions 540 and 543. A helical transmembrane segment spans residues Phe604 to Trp624.

This sequence belongs to the ligand-gated ion channel (TC 1.A.9) family. Acetylcholine receptor (TC 1.A.9.1) subfamily. Alpha-4/CHRNA4 sub-subfamily. Neuronal AChR is composed of two different types of subunits: alpha and beta. CHRNA4 forms heteropentameric neuronal acetylcholine receptors with CHRNB2 and CHRNB4, as well as CHRNA5 and CHRNB3 as accesory subunits. Found in two major stoichiometric forms, LS (low agonist sensitivity): (CHRNA4)3:(CHRNB2)2 and HS (high agonist sensitivity): (CHRNA4)2:(CHRNB2)3, the two stoichiometric forms differ in their unitary conductance, calcium permeability, ACh sensitivity and potentiation by divalent cation. Cells produce predominantly an (CHRNA4)3:(CHRNB2)2 nAChR. The (CHRNA4)2:(CHRNB2)3 expression is selectively up-regulated by nicotine and has lower single channel conductance and calcium permeability. In the striatum, also forms CHRNA4:CHRNA6:CHRNB2 complexes. Also found in the stoichiometric form: (CHRNA4:CHRNB2)2:CHRNB3. Interacts with RIC3; which is required for proper folding and assembly. Interacts with LYPD6.

It localises to the synaptic cell membrane. The protein localises to the cell membrane. The enzyme catalyses K(+)(in) = K(+)(out). It catalyses the reaction Na(+)(in) = Na(+)(out). The catalysed reaction is Ca(2+)(in) = Ca(2+)(out). Its activity is regulated as follows. Activated by a myriad of ligands such as acetylcholine, cytisine, nicotine, choline and epibatidine. Channel potentiation by calcium is stoichiometry-selective, CHRNA4:CHRNB2 nACh receptor is achieved by calcium association with topographically distinct sites framed by anionic residues within the CHRNA4 subunit and between the CHRNA4 and CHRNB2 subunits. nAChR activity is inhibited by the antagonist alpha-conotoxins BuIA, PnIA, GID and MII, small disulfide-constrained peptides from cone snails. Its function is as follows. Component of neuronal acetylcholine receptors (nAChRs) that function as pentameric, ligand-gated cation channels with high calcium permeability among other activities. nAChRs are excitatory neurotrasnmitter receptors formed by a collection of nAChR subunits known to mediate synaptic transmission in the nervous system and the neuromuscular junction. Each nAchR subunit confers differential attributes to channel properties, including activation, deactivation and desensitization kinetics, pH sensitivity, cation permeability, and binding to allosteric modulators. CHRNA4 forms heteropentameric neuronal acetylcholine receptors with CHRNB2 and CHRNB4, as well as CHRNA5 and CHRNB3 as accesory subunits. Is the most abundant nAChR subtype expressed in the central nervous system. Found in two major stoichiometric forms,(CHRNA4)3:(CHRNB2)2 and (CHRNA4)2:(CHRNB2)3, the two stoichiometric forms differ in their unitary conductance, calcium permeability, ACh sensitivity and potentiation by divalent cation. Involved in the modulation of calcium-dependent signaling pathways, influences the release of neurotransmitters, including dopamine, glutamate and GABA. The sequence is that of Neuronal acetylcholine receptor subunit alpha-4 (Chrna4) from Mus musculus (Mouse).